Consider the following 136-residue polypeptide: Nuclear receptor 2C2-associated protein (136 aa).

Belongs to the NR2C2AP family.

It localises to the nucleus. May act as a repressor of nr2c2-mediated transactivation by suppressing the binding between nr2c2 and its response element in target genes. In Xenopus laevis (African clawed frog), this protein is Nuclear receptor 2C2-associated protein (nr2c2ap).